We begin with the raw amino-acid sequence, 225 residues long: Transcription factor HES-7 (225 aa).

Positions 12–69 (GPKMLKPLVEKRRRDRINRSLEELRLLLLERTRDQNLRNPKLEKAEILEFAVGYLRER) constitute a bHLH domain. One can recognise an Orange domain in the interval 92–122 (YLSGFRECLLRLAAFAHDASPAARAQLFSAL). A disordered region spans residues 125–225 (YLRPKPPRPK…PPPAFWRPWP (101 aa)). Positions 147-158 (LDPAAPALGPAL) are enriched in low complexity. Residues 212–225 (APLPPPPAFWRPWP) are compositionally biased toward pro residues. The WRPW motif signature appears at 221-224 (WRPW).

Transcription repression requires formation of a complex with a corepressor protein of the Groucho/TLE family.

The protein resides in the nucleus. Its function is as follows. Transcriptional repressor. Represses transcription from both N box- and E box-containing promoters. May with HES1, cooperatively regulate somite formation in the presomitic mesoderm (PSM). May function as a segmentation clock, which is essential for coordinated somite segmentation. The polypeptide is Transcription factor HES-7 (HES7) (Homo sapiens (Human)).